The chain runs to 240 residues: Protein GrpE (240 aa).

Disordered stretches follow at residues 1–54 (MSGD…NEAR) and 206–240 (VSMG…DGNG). Positions 215–233 (GASSQPAEAPAADAPAEDS) are enriched in low complexity.

It belongs to the GrpE family. In terms of assembly, homodimer.

It is found in the cytoplasm. Its function is as follows. Participates actively in the response to hyperosmotic and heat shock by preventing the aggregation of stress-denatured proteins, in association with DnaK and GrpE. It is the nucleotide exchange factor for DnaK and may function as a thermosensor. Unfolded proteins bind initially to DnaJ; upon interaction with the DnaJ-bound protein, DnaK hydrolyzes its bound ATP, resulting in the formation of a stable complex. GrpE releases ADP from DnaK; ATP binding to DnaK triggers the release of the substrate protein, thus completing the reaction cycle. Several rounds of ATP-dependent interactions between DnaJ, DnaK and GrpE are required for fully efficient folding. This is Protein GrpE from Synechococcus sp. (strain WH7803).